The primary structure comprises 190 residues: Lipid A acyltransferase PagP (190 aa).

The signal sequence occupies residues 1–18 (MKRLISCLTIICALNASA). Active-site residues include His60, Asp103, and Ser104.

It belongs to the lipid A palmitoyltransferase family. As to quaternary structure, homodimer.

It is found in the cell outer membrane. It catalyses the reaction a lipid A + a 1,2-diacyl-sn-glycero-3-phosphocholine = a hepta-acyl lipid A + a 2-acyl-sn-glycero-3-phosphocholine. The enzyme catalyses a lipid IVA + a 1,2-diacyl-sn-glycero-3-phosphocholine = a lipid IVB + a 2-acyl-sn-glycero-3-phosphocholine. The catalysed reaction is a lipid IIA + a 1,2-diacyl-sn-glycero-3-phosphocholine = a lipid IIB + a 2-acyl-sn-glycero-3-phosphocholine. In terms of biological role, transfers a fatty acid residue from the sn-1 position of a phospholipid to the N-linked hydroxyfatty acid chain on the proximal unit of lipid A or its precursors. The sequence is that of Lipid A acyltransferase PagP from Legionella pneumophila subsp. pneumophila (strain Philadelphia 1 / ATCC 33152 / DSM 7513).